Consider the following 313-residue polypeptide: R2-like ligand binding oxidase (313 aa).

Mn(2+)-binding residues include E68, E101, and H104. The 3-(O4'-tyrosyl)-valine (Val-Tyr) cross-link spans V71 to Y162. E101 is a binding site for Fe cation. Fe cation is bound by residues E167, E202, and H205.

It belongs to the ribonucleoside diphosphate reductase small chain family. R2-like ligand binding oxidase subfamily. Homodimer. Fe cation is required as a cofactor. The cofactor is Mn(2+).

Its function is as follows. Probable oxidase that might be involved in lipid metabolism. This chain is R2-like ligand binding oxidase, found in Mycobacteroides abscessus (strain ATCC 19977 / DSM 44196 / CCUG 20993 / CIP 104536 / JCM 13569 / NCTC 13031 / TMC 1543 / L948) (Mycobacterium abscessus).